A 221-amino-acid chain; its full sequence is UPF0758 protein YicR (221 aa).

Positions 99 to 221 (ALLSPEMTRE…YVSFAERGWI (123 aa)) constitute an MPN domain. Zn(2+) is bound by residues histidine 170, histidine 172, and aspartate 183. Residues 170-183 (HNHPSGCAEPSKAD) carry the JAMM motif motif.

This sequence belongs to the UPF0758 family. YicR subfamily.

The polypeptide is UPF0758 protein YicR (Salmonella newport (strain SL254)).